Consider the following 145-residue polypeptide: 3-dehydroquinate dehydratase (145 aa).

Tyr-23 (proton acceptor) is an active-site residue. Substrate-binding residues include Asn-75, His-81, and Asp-88. His-101 acts as the Proton donor in catalysis. Substrate contacts are provided by residues 102–103 and Arg-112; that span reads IS.

It belongs to the type-II 3-dehydroquinase family. Homododecamer.

It carries out the reaction 3-dehydroquinate = 3-dehydroshikimate + H2O. It functions in the pathway metabolic intermediate biosynthesis; chorismate biosynthesis; chorismate from D-erythrose 4-phosphate and phosphoenolpyruvate: step 3/7. Catalyzes a trans-dehydration via an enolate intermediate. The protein is 3-dehydroquinate dehydratase of Caldicellulosiruptor saccharolyticus (strain ATCC 43494 / DSM 8903 / Tp8T 6331).